The following is a 536-amino-acid chain: Phosphoenolpyruvate carboxykinase (ATP) (536 aa).

Substrate is bound by residues Arg-63, Tyr-203, and Lys-209. ATP-binding positions include Lys-209, His-228, and 244 to 252 (GLSGTGKTT). 2 residues coordinate Mn(2+): Lys-209 and His-228. Asp-265 lines the Mn(2+) pocket. Residues Glu-293, Arg-329, 445–446 (RI), and Thr-451 each bind ATP. Residue Arg-329 coordinates substrate.

Belongs to the phosphoenolpyruvate carboxykinase (ATP) family. In terms of assembly, monomer. Mn(2+) serves as cofactor.

The protein localises to the cytoplasm. It catalyses the reaction oxaloacetate + ATP = phosphoenolpyruvate + ADP + CO2. The protein operates within carbohydrate biosynthesis; gluconeogenesis. In terms of biological role, involved in the gluconeogenesis. Catalyzes the conversion of oxaloacetate (OAA) to phosphoenolpyruvate (PEP) through direct phosphoryl transfer between the nucleoside triphosphate and OAA. This is Phosphoenolpyruvate carboxykinase (ATP) from Colwellia psychrerythraea (strain 34H / ATCC BAA-681) (Vibrio psychroerythus).